The following is a 220-amino-acid chain: 2-hydroxy-3-keto-5-methylthiopentenyl-1-phosphate phosphatase (220 aa).

It belongs to the HAD-like hydrolase superfamily. MtnX family.

It catalyses the reaction 2-hydroxy-5-methylsulfanyl-3-oxopent-1-enyl phosphate + H2O = 1,2-dihydroxy-5-(methylsulfanyl)pent-1-en-3-one + phosphate. It functions in the pathway amino-acid biosynthesis; L-methionine biosynthesis via salvage pathway; L-methionine from S-methyl-5-thio-alpha-D-ribose 1-phosphate: step 4/6. In terms of biological role, dephosphorylates 2-hydroxy-3-keto-5-methylthiopentenyl-1-phosphate (HK-MTPenyl-1-P) yielding 1,2-dihydroxy-3-keto-5-methylthiopentene (DHK-MTPene). The sequence is that of 2-hydroxy-3-keto-5-methylthiopentenyl-1-phosphate phosphatase from Geobacillus kaustophilus (strain HTA426).